The sequence spans 1775 residues: Internalin I (1775 aa).

Residues 1–28 (MKKKFSIVIISVLLLGYLAPFDTLLVGA) form the signal peptide. Residues 36–50 (DTTVKTAETETATEA) are compositionally biased toward low complexity. The tract at residues 36 to 97 (DTTVKTAETE…SNIKTEINTD (62 aa)) is disordered. Residues 58–85 (DNEKAEEPKEAEASKETTEKEEKAKTKE) show a composition bias toward basic and acidic residues. LRR repeat units lie at residues 152–176 (AISQLDLSGETGNDPTDISNIEGLQ), 180–201 (NLTSLNLSENNISDLAPIKDLV), 202–224 (NLVSLNLSSNRTLVNLSGVEGLV), 225–247 (NLQELNVSANKALEDISQVAALP), 248–269 (VLKEISAQGCNIKTLELDNPAG), 274–295 (ELETFYLQENDLTDLTSLAKLP), 296–318 (KLKNLYIKGNASLKSLATLKGAT), 319–341 (KLQLIDASNCTDLETLGDISGLS), 342–364 (ELEMIQLSGCSKLKEITSLKDLP), 365–386 (NLVNITADSCAIEDLGTLNNLP), 387–409 (KLQTLILSDNKDLTNINAITDMP), 410–431 (QLKTLALDGCGITSIGTLDNLP), 432–453 (KLEKLDLKENQLTSISEINDLP), 454–475 (RLSYLDVSVNYLTTIGELKKLP), 476–497 (LLEWLNVSSNRLSDVSTLTNFP), 498–519 (SLNYINVSNNVIRTVGKMTELP), 520–541 (SLKEFYAQNNNVSDISMIHDMP), 542–563 (NLRKVDASNNLITNIGTFDNLP), 564–585 (KLQNLDVHSNRITNTSVIHDLP), 586–607 (SLETFYAQNNLITNIGTMDNLP), 608–629 (ELTYVDLSFNRIPSLAPIGDLP), 630–650 (KLEILKVTDNYSYLRSLGTMD), 654–675 (KLRNLELQNNYLNYTGTEGNLS), 682–704 (NLTELNLRDNGYISDISGLSTLS), 705–726 (RLIYLNLDSNKIKDISALSNLT), 727–748 (TLQELTLENNQIEDISALSDLD), and 749–770 (NLNKLALSKNKIIDISPAANMV). An LRRCT domain is found at 782 to 869 (TYTLPTVLSY…SAVKVTANAE (88 aa)). MucBP domains lie at 1507–1566 (DAAA…EQTV), 1572–1631 (AIEP…PQTI), and 1641–1702 (SKKS…SQTV). Positions 1713-1737 (SKDEPKVKGKTNQPPSADTKLKVDN) are disordered. The LPXTG sorting signal signature appears at 1740-1744 (LPATG). Pentaglycyl murein peptidoglycan amidated threonine is present on Thr-1743. A propeptide spans 1744–1775 (GDTENMALAVLIGFNMLLVASIFLFRKPKTNQ) (removed by sortase).

Belongs to the internalin family.

It localises to the secreted. The protein localises to the cell wall. A role in virulence could not be demonstrated. The sequence is that of Internalin I (inlI) from Listeria monocytogenes serotype 4b (strain F2365).